The following is a 133-amino-acid chain: FPRL1 inhibitory protein (133 aa).

An N-terminal signal peptide occupies residues 1–28 (MKKNITKTIIASTVIAAGLLTQTNDAKA).

This sequence belongs to the CHIPS/FLIPr family.

The protein resides in the secreted. May be involved in countering the first line of host defense mechanisms. Impairs the leukocyte response to FPRL1 agonists by binding directly to host FPRL1. The protein is FPRL1 inhibitory protein (flr) of Staphylococcus aureus (strain Mu50 / ATCC 700699).